The following is an 839-amino-acid chain: Conserved oligomeric Golgi complex subunit 6 (839 aa).

It belongs to the COG6 family.

Its subcellular location is the golgi apparatus membrane. Functionally, acts as a component of the peripheral membrane COG complex that is involved in intra-Golgi protein trafficking. COG is located at the cis-Golgi, and regulates tethering of retrograde intra-Golgi vesicles and possibly a number of other membrane trafficking events. This is Conserved oligomeric Golgi complex subunit 6 (COG6) from Saccharomyces cerevisiae (strain YJM789) (Baker's yeast).